Reading from the N-terminus, the 308-residue chain is Transcription factor zip-2 (308 aa).

The segment covering 217–229 (QSSSSSTVETTIT) has biased composition (polar residues). Residues 217-277 (QSSSSSTVET…RESKEERERL (61 aa)) are disordered. The bZIP domain occupies 242-305 (SSDYRHKRDK…EDYKRLVMMF (64 aa)). The tract at residues 246 to 276 (RHKRDKNNLASQKSRQKRQAKIRESKEERER) is basic motif. Residues 266–277 (KIRESKEERERL) are compositionally biased toward basic and acidic residues. Positions 277-291 (LEKRKVQLQAMVLTL) are leucine-zipper.

It belongs to the bZIP family. C/EBP subfamily. As to expression, expressed in the pharynx and throughout the intestine.

The protein resides in the nucleus. Its function is as follows. Transcription factor that binds to the promoter and the enhancer regions of target genes. May act together with the bZIP transcription factor, cebp-2. Involved in responding to mitochondrial damage. Plays a role in the delay of age-associated mitochondrial fragmentation and muscle decline. Has a protective role in response to infection by the Gram-negative bacterium P.aeruginosa. Required to prevent P.aeruginosa ToxA-mediated lethality. Required for the activation of several infection response genes including irg-1 and irg-2 following P.aeruginosa infection; target gene activation may involve effects of the bacterial toxin, ToxA, and perhaps other toxins. This chain is Transcription factor zip-2, found in Caenorhabditis elegans.